Reading from the N-terminus, the 520-residue chain is Nucleobase-ascorbate transporter 1 (520 aa).

12 helical membrane passes run 36 to 56 (YILMLGTSAFIPALLVPAMGG), 64 to 84 (VIQTLLFVAGIKTLLQALFGT), 86 to 106 (LPAVVGGSLAYVVPIAYIIND), 129 to 149 (ALIVASSIQIILGYSQVWGLF), 150 to 170 (SRFFSPLGMAPVVGLVGLGMF), 174 to 194 (FPQLGNCIEIGLPMLLLVIGL), 213 to 233 (FPILICVTIVWIYAVILTASG), 279 to 299 (FAMMSAVLVSMVESTGAYIAA), 362 to 382 (GFMIVFSTLGKFGAVFASIPV), 384 to 404 (IYAALHCILFGLVAAVGLSFL), 415 to 435 (LMITGLSLFLGISIPQFFAQY), and 453 to 473 (AFLNTLFMSPATVGLIIAVFM).

Belongs to the nucleobase:cation symporter-2 (NCS2) (TC 2.A.40) family. As to expression, expressed in cotyledons 4 days after imbibition (DAI). Expressed in the minor and major veins of cotyledons and leaves, in the shoot apex and pedicels. Expressed in the root meristems, root tips and lateral root primordia.

Its subcellular location is the membrane. This Arabidopsis thaliana (Mouse-ear cress) protein is Nucleobase-ascorbate transporter 1 (NAT1).